The sequence spans 873 residues: Leucine--tRNA ligase (873 aa).

The short motif at 43-53 is the 'HIGH' region element; the sequence is PYPSGSLHMGH. The short motif at 624–628 is the 'KMSKS' region element; that stretch reads TMSKS. Residue lysine 627 coordinates ATP.

This sequence belongs to the class-I aminoacyl-tRNA synthetase family.

It localises to the cytoplasm. It catalyses the reaction tRNA(Leu) + L-leucine + ATP = L-leucyl-tRNA(Leu) + AMP + diphosphate. In Synechococcus sp. (strain JA-3-3Ab) (Cyanobacteria bacterium Yellowstone A-Prime), this protein is Leucine--tRNA ligase.